The primary structure comprises 491 residues: Putative mannan endo-1,4-beta-mannosidase 5 (491 aa).

A signal peptide spans 1–31 (METSYREEEARRKASLLHCIFFFLLGALAMA). Substrate-binding residues include Trp-134 and Asn-248. Glu-249 serves as the catalytic Proton donor. Residue Tyr-330 coordinates substrate. The active-site Nucleophile is the Glu-372. Asn-385 carries N-linked (GlcNAc...) asparagine glycosylation. Trp-416 lines the substrate pocket. Residue Asn-471 is glycosylated (N-linked (GlcNAc...) asparagine).

Belongs to the glycosyl hydrolase 5 (cellulase A) family. In terms of tissue distribution, expression not detected.

The protein localises to the secreted. It carries out the reaction Random hydrolysis of (1-&gt;4)-beta-D-mannosidic linkages in mannans, galactomannans and glucomannans.. This is Putative mannan endo-1,4-beta-mannosidase 5 (MAN5) from Oryza sativa subsp. japonica (Rice).